The sequence spans 397 residues: Putative nickel insertion protein (397 aa).

The protein belongs to the LarC family.

The chain is Putative nickel insertion protein from Synechococcus sp. (strain JA-3-3Ab) (Cyanobacteria bacterium Yellowstone A-Prime).